A 495-amino-acid chain; its full sequence is Potassium voltage-gated channel subfamily A member 1 (495 aa).

The tract at residues 1–30 (MTVMSGENADEASTAPGHPQDGSYPRQADH) is disordered. The interval 1–128 (MTVMSGENAD…FYELGEEAME (128 aa)) is tetramerization domain. Over 1-164 (MTVMSGENAD…LLFEYPESSG (164 aa)) the chain is Cytoplasmic. S23 bears the Phosphoserine mark. Residues 165 to 186 (PARVIAIVSVMVILISIVIFCL) traverse the membrane as a helical segment. Over 187–220 (ETLPELKDDKDFTGTIHRIDNTTVIYTSNIFTDP) the chain is Extracellular. N207 is a glycosylation site (N-linked (GlcNAc...) asparagine). Residues 221-242 (FFIVETLCIIWFSFELVVRFFA) traverse the membrane as a helical segment. C243 carries S-palmitoyl cysteine lipidation. The Cytoplasmic segment spans residues 243–253 (CPSKTDFFKNI). A helical transmembrane segment spans residues 254–274 (MNFIDIVAIIPYFITLGTEIA). Residues 275–287 (EQEGNQKGEQATS) lie on the Extracellular side of the membrane. Residues 288-308 (LAILRVIRLVRVFRIFKLSRH) form a helical; Voltage-sensor membrane-spanning segment. The Cytoplasmic portion of the chain corresponds to 309-323 (SKGLQILGQTLKASM). Positions 310 to 323 (KGLQILGQTLKASM) are S4-S5 linker. S322 is modified (phosphoserine; by PKA). The helical transmembrane segment at 324–345 (RELGLLIFFLFIGVILFSSAVY) threads the bilayer. The Extracellular portion of the chain corresponds to 346–359 (FAEAEEAESHFSSI). Positions 360 to 371 (PDAFWWAVVSMT) form an intramembrane region, helical. The Selectivity filter signature appears at 372–377 (TVGYGD). Residues 372–379 (TVGYGDMY) lie within the membrane without spanning it. Over 380-386 (PVTIGGK) the chain is Extracellular. A helical membrane pass occupies residues 387–415 (IVGSLCAIAGVLTIALPVPVIVSNFNYFY). Residues 416–495 (HRETEGEEQA…VNKSKLLTDV (80 aa)) lie on the Cytoplasmic side of the membrane. Phosphoserine occurs at positions 437 and 439. At S446 the chain carries Phosphoserine; by PKA. The short motif at 493–495 (TDV) is the PDZ-binding element.

The protein belongs to the potassium channel family. A (Shaker) (TC 1.A.1.2) subfamily. Kv1.1/KCNA1 sub-subfamily. Homotetramer and heterotetramer with other channel-forming alpha subunits, such as KCNA2, KCNA4, KCNA5, KCNA6 and KCNA7. Channel activity is regulated by interaction with the beta subunits KCNAB1 and KCNAB2. Identified in a complex with KCNA2 and KCNAB2. Interacts (via C-terminus) with the PDZ domains of DLG1, DLG2 and DLG4. Interacts with LGI1 within a complex containing LGI1, KCNA4 and KCNAB1. Interacts (via N-terminus) with STX1A; this promotes channel inactivation. Interacts (via N-terminus) with the heterodimer formed by GNB1 and GNG2; this promotes channel inactivation. Can interact simultaneously with STX1A and the heterodimer formed by GNB1 and GNG2. Interacts (via cytoplasmic N-terminal domain) with KCNRG; this inhibits channel activity. Interacts with ANK3; this inhibits channel activity. Interacts with ADAM11. In terms of processing, N-glycosylated. Palmitoylated on Cys-243; which may be required for membrane targeting. Post-translationally, phosphorylated on tyrosine residues. Phosphorylation increases in response to NRG1; this inhibits channel activity. Phosphorylation at Ser-446 regulates channel activity by down-regulating expression at the cell membrane. Detected in brain. Expressed in cerebellar cortex basket cell terminals, the area surround the Purkinje cell soma, and the pinceaux expansions encircling the axon initial segment (at protein level). Detected in the juxtaparanodal regions of the nodes of Ranvier in myelinated axons. Detected in the paranodal region in sciatic nerve. Detected on cell bodies in cerebellum, dorsal and ventral cochlear nucleus, pontine reticular nucleus, mesencephalic trigeminal nucleus, motor trigeminal nucleus and the pricipal sensory trigeminal nucleus. Detected in terminal fields of basket cells in the cerebellum corpus medullare. Detected in hippocampus CA3 pyramidal neurons and in the hilus and stratum moleculare of the dentate gyrus. Detected in the central nucleus and the external nucleus of the inferior colliculus. Detected in fiber tracts in the optic tract, external medullary lamina, stria terminalis, medulla, ventral pallidum and substantia nigra. Detected in neurons from dorsal root ganglion. Detected in neurons in the medial nucleus of the trapezoid body. Detected in midbrain dopamine neuron axon terminals. Detected in brain cortex. Detected in brainstem. Detected in juxtaparanodal regions of the nodes of Ranvier in the vagus nerve, but only at very low levels in the heart. Detected in the islet of Langerhans. Detected at the luminal membrane in distal convoluted tubules in the kidney (at protein level). Detected in hippocampus, thalamus, neocortex and ventral brain cortex, including the piriform and entorhinal cortex and the amygdala. Detected in midbrain dopamine neurons. Detected in heart atrium, ventricle, sinoatrial node and atrioventricular node.

Its subcellular location is the cell membrane. It localises to the cell projection. The protein localises to the axon. It is found in the membrane. The protein resides in the perikaryon. Its subcellular location is the dendrite. It localises to the cell junction. The protein localises to the synapse. It is found in the cytoplasmic vesicle. The protein resides in the endoplasmic reticulum. Its subcellular location is the presynaptic cell membrane. It localises to the presynapse. It catalyses the reaction K(+)(in) = K(+)(out). Inhibited by 4-aminopyridine (4-AP), tetraethylammonium (TEA) and dendrotoxin (DTX), but not by charybdotoxin (CTX). In terms of biological role, voltage-gated potassium channel that mediates transmembrane potassium transport in excitable membranes, primarily in the brain and the central nervous system, but also in the kidney. Contributes to the regulation of the membrane potential and nerve signaling, and prevents neuronal hyperexcitability. Forms tetrameric potassium-selective channels through which potassium ions pass in accordance with their electrochemical gradient. The channel alternates between opened and closed conformations in response to the voltage difference across the membrane. Can form functional homotetrameric channels and heterotetrameric channels that contain variable proportions of KCNA1, KCNA2, KCNA4, KCNA5, KCNA6, KCNA7, and possibly other family members as well; channel properties depend on the type of alpha subunits that are part of the channel. Channel properties are modulated by cytoplasmic beta subunits that regulate the subcellular location of the alpha subunits and promote rapid inactivation of delayed rectifier potassium channels. In vivo, membranes probably contain a mixture of heteromeric potassium channel complexes, making it difficult to assign currents observed in intact tissues to any particular potassium channel family member. Homotetrameric KCNA1 forms a delayed-rectifier potassium channel that opens in response to membrane depolarization, followed by slow spontaneous channel closure. In contrast, a heterotetrameric channel formed by KCNA1 and KCNA4 shows rapid inactivation. Regulates neuronal excitability in hippocampus, especially in mossy fibers and medial perforant path axons, preventing neuronal hyperexcitability. May function as down-stream effector for G protein-coupled receptors and inhibit GABAergic inputs to basolateral amygdala neurons. May contribute to the regulation of neurotransmitter release, such as gamma-aminobutyric acid (GABA) release. Plays a role in regulating the generation of action potentials and preventing hyperexcitability in myelinated axons of the vagus nerve, and thereby contributes to the regulation of heart contraction. Required for normal neuromuscular responses. Regulates the frequency of neuronal action potential firing in response to mechanical stimuli, and plays a role in the perception of pain caused by mechanical stimuli, but does not play a role in the perception of pain due to heat stimuli. Required for normal responses to auditory stimuli and precise location of sound sources, but not for sound perception. The use of toxins that block specific channels suggest that it contributes to the regulation of the axonal release of the neurotransmitter dopamine. Required for normal postnatal brain development and normal proliferation of neuronal precursor cells in the brain. Plays a role in the reabsorption of Mg(2+) in the distal convoluted tubules in the kidney and in magnesium ion homeostasis, probably via its effect on the membrane potential. This Mus musculus (Mouse) protein is Potassium voltage-gated channel subfamily A member 1.